The following is a 230-amino-acid chain: AA9 family lytic polysaccharide monooxygenase H (230 aa).

A signal peptide spans 1-17; sequence MKTLSAGLLALASAASA. H18 and H89 together coordinate Cu(2+). C59 and C178 are joined by a disulfide. 2 residues coordinate O2: H164 and Q173. Residue Y175 participates in Cu(2+) binding.

Belongs to the polysaccharide monooxygenase AA9 family. Cu(2+) serves as cofactor.

The protein localises to the secreted. It catalyses the reaction [(1-&gt;4)-beta-D-glucosyl]n+m + reduced acceptor + O2 = 4-dehydro-beta-D-glucosyl-[(1-&gt;4)-beta-D-glucosyl]n-1 + [(1-&gt;4)-beta-D-glucosyl]m + acceptor + H2O.. Its function is as follows. Lytic polysaccharide monooxygenase (LPMO) that depolymerizes crystalline and amorphous polysaccharides via the oxidation of scissile alpha- or beta-(1-4)-glycosidic bonds, yielding primarly C1 oxidation products. Catalysis by LPMOs requires the reduction of the active-site copper from Cu(II) to Cu(I) by a reducing agent and H(2)O(2) or O(2) as a cosubstrate. Active on hemicelluloses, including xylan, glucomannan, and xyloglucan. Preferentially cleaves residual xylan in phosphoric acid-swollen cellulose (PASC). Moreover, when exposed to cellulose-xylan blends, shows a preference for xylan and for releasing oxidized xylooligosaccharides. Has no activity on ivory nut mannan (INM), a linear beta-1,4-linked mannan without substitutions. In Malbranchea cinnamomea (Thermophilic fungus), this protein is AA9 family lytic polysaccharide monooxygenase H.